Reading from the N-terminus, the 470-residue chain is DNA primase large subunit (470 aa).

[4Fe-4S] cluster contacts are provided by Cys279, Cys358, Cys376, and Cys414. Residues 449–470 (EEKKSAKQSNNKENENQSIDEK) form a disordered region.

This sequence belongs to the eukaryotic-type primase large subunit family. In terms of assembly, heterodimer of a small subunit and a large subunit. The cofactor is [4Fe-4S] cluster.

Functionally, DNA primase is the polymerase that synthesizes small RNA primers for the Okazaki fragments made during discontinuous DNA replication. The polypeptide is DNA primase large subunit (prim2) (Dictyostelium discoideum (Social amoeba)).